Reading from the N-terminus, the 422-residue chain is 2-oxoglutarate and iron-dependent oxygenase JMJD4 (422 aa).

One can recognise a JmjC domain in the interval 139–298 (QRNFPEHNIY…IMWQFLQDEL (160 aa)). Fe cation-binding residues include His186, Asp188, and His266.

This sequence belongs to the JMJD6 family. Fe(2+) is required as a cofactor.

It localises to the cytoplasm. The catalysed reaction is L-lysyl-[protein] + 2-oxoglutarate + O2 = 4-hydroxy-L-lysyl-[protein] + succinate + CO2. Functionally, catalyzes the 2-oxoglutarate and iron-dependent C4-lysyl hydroxylation of ETF1 at 'Lys-63' thereby promoting the translational termination efficiency of ETF1. This is 2-oxoglutarate and iron-dependent oxygenase JMJD4 (jmjd4) from Danio rerio (Zebrafish).